The chain runs to 146 residues: Histone H2A.1 (146 aa).

The disordered stretch occupies residues 118-146; the sequence is SPAAAEKEAKSPKKKTSTKSPKKKVAAKE. 2 short sequence motifs (SPKK motif) span residues 128-131 and 137-140; these read SPKK. Basic residues predominate over residues 129–146; it reads PKKKTSTKSPKKKVAAKE.

It belongs to the histone H2A family. As to quaternary structure, the nucleosome is a histone octamer containing two molecules each of H2A, H2B, H3 and H4 assembled in one H3-H4 heterotetramer and two H2A-H2B heterodimers. The octamer wraps approximately 147 bp of DNA. Post-translationally, phosphorylated within its C-terminal part, probably at the SPKK motifs. In terms of tissue distribution, expressed preferentially in meristematic tissues of young seedlings, in stigma and ovary but not in pollen.

Its subcellular location is the nucleus. The protein resides in the chromosome. In terms of biological role, core component of nucleosome. Nucleosomes wrap and compact DNA into chromatin, limiting DNA accessibility to the cellular machineries which require DNA as a template. Histones thereby play a central role in transcription regulation, DNA repair, DNA replication and chromosomal stability. DNA accessibility is regulated via a complex set of post-translational modifications of histones, also called histone code, and nucleosome remodeling. The polypeptide is Histone H2A.1 (H2A-9) (Triticum aestivum (Wheat)).